A 568-amino-acid polypeptide reads, in one-letter code: MAGUK p55 subfamily member 3 (568 aa).

L27 domains lie at glutamate 6–serine 60 and proline 61–valine 118. The PDZ domain maps to isoleucine 137–threonine 218. Positions aspartate 226–leucine 296 constitute an SH3 domain. Serine 307 bears the Phosphoserine mark. In terms of domain architecture, Guanylate kinase-like spans proline 385–serine 568.

It belongs to the MAGUK family. As to quaternary structure, interacts with HTR2C; this interaction stabilizes the receptor at the plasma membrane and prevents the desensitization of the HTR2C receptor-mediated calcium response. Interacts with HTR2A. Interacts with HTR4. Interacts (via PDZ domain) with CADM1 (via C-terminus)Interacts (via PDZ domain) with CADM1; this interaction connects CADM1 with DLG1. Interacts (via Guanylate kinase-like domain) with PALS1. Interacts with DLG1 (via N-terminus); this interaction connects CADM1 with DLG1 and links CADM1 with the regulatory subunit of phosphoinositide-3-kinase (PI3K) by forming a multiprotein complex and participates in cell spreading. In terms of tissue distribution, expressed in brain, skeletal muscle, testis, kidney, and lung.

It is found in the apical cell membrane. It localises to the cell membrane. Its subcellular location is the cell junction. The protein localises to the adherens junction. In terms of biological role, participates in cell spreading through the phosphoinositide-3-kinase (PI3K) pathway by connecting CADM1 to DLG1 and the regulatory subunit of phosphoinositide-3-kinase (PI3K). Stabilizes HTR2C at the plasma membrane and prevents its desensitization. May participates in the maintenance of adherens junctions. In Mus musculus (Mouse), this protein is MAGUK p55 subfamily member 3.